The primary structure comprises 110 residues: Class I hydrophobin Po.HYD (110 aa).

An N-terminal signal peptide occupies residues 1–27; sequence MFSKATLFFTTVSRYRDTQAPIPTGQT. 4 cysteine pairs are disulfide-bonded: C35-C91, C42-C85, C43-C75, and C92-C105.

It belongs to the fungal hydrophobin family. As to quaternary structure, self-assembles to form functional amyloid fibrils called rodlets. Self-assembly into fibrillar rodlets occurs spontaneously at hydrophobic:hydrophilic interfaces and the rodlets further associate laterally to form amphipathic monolayers.

Its subcellular location is the secreted. The protein resides in the cell wall. Its function is as follows. Aerial growth, conidiation, and dispersal of filamentous fungi in the environment rely upon a capability of their secreting small amphipathic proteins called hydrophobins (HPBs) with low sequence identity. Class I can self-assemble into an outermost layer of rodlet bundles on aerial cell surfaces, conferring cellular hydrophobicity that supports fungal growth, development and dispersal; whereas Class II form highly ordered films at water-air interfaces through intermolecular interactions but contribute nothing to the rodlet structure. The chain is Class I hydrophobin Po.HYD from Pleurotus ostreatus (Oyster mushroom).